Consider the following 480-residue polypeptide: MNTPLYKALIQHARRNSHSFHVPGHHNGDVFFDDAKSIFDPLLTIDVTELAGLDDLHHPSGVIKEAQELASQLYGSAESFFLVNGTTVGNLAMILSVCEPGDTILVQRNCHKSVFHAVDLSGAEPVYLAPDVDSAMHVPTHVPLGTIKEALEAYPDAKGLVLTNPTYYGHSADLTEIITEAHHYGIPVLVDEAHGAHFILGEPFPVSALKMGADIVVQSAHKTLPAMTMGSYLHLNSSCRINRDRVAEYLNRLQSSSPSYPIMASLDIARAYVQHIIEEQKLSDILQRIETLKQTFDSLTNAEAVNPANPLIITDPLKLTIRSKRGHSGYTLQSILERANIFTELADENQVLLVLPLGGKRRINAEIIRSIDEEIEKTPPDQTFVSAEWGVQPVTVLPYPKKVLHSFKKEYVSFEEAAGRLNAEDIIPYPPGIPMIMAGERITKESVQKLSRLISMKTHVQGNMKIKEKQLLVYIEEEKS.

Residue lysine 222 is modified to N6-(pyridoxal phosphate)lysine.

Belongs to the Orn/Lys/Arg decarboxylase class-I family. The cofactor is pyridoxal 5'-phosphate.

This is an uncharacterized protein from Bacillus subtilis (strain 168).